The following is a 621-amino-acid chain: Chaperone protein HscA homolog (621 aa).

The protein belongs to the heat shock protein 70 family.

Its function is as follows. Chaperone involved in the maturation of iron-sulfur cluster-containing proteins. Has a low intrinsic ATPase activity which is markedly stimulated by HscB. This is Chaperone protein HscA homolog from Pseudomonas fluorescens (strain Pf0-1).